Consider the following 312-residue polypeptide: 4-diphosphocytidyl-2-C-methyl-D-erythritol kinase (312 aa).

Residue Lys-10 is part of the active site. 105-115 (PVAGGMAGGSA) is an ATP binding site. Asp-146 is an active-site residue.

This sequence belongs to the GHMP kinase family. IspE subfamily.

The enzyme catalyses 4-CDP-2-C-methyl-D-erythritol + ATP = 4-CDP-2-C-methyl-D-erythritol 2-phosphate + ADP + H(+). Its pathway is isoprenoid biosynthesis; isopentenyl diphosphate biosynthesis via DXP pathway; isopentenyl diphosphate from 1-deoxy-D-xylulose 5-phosphate: step 3/6. Functionally, catalyzes the phosphorylation of the position 2 hydroxy group of 4-diphosphocytidyl-2C-methyl-D-erythritol. This Corynebacterium glutamicum (strain R) protein is 4-diphosphocytidyl-2-C-methyl-D-erythritol kinase.